The sequence spans 463 residues: Bifunctional protein HldE (463 aa).

The segment at 1–315 (MKKILVIGDL…LILNQTHPKI (315 aa)) is ribokinase. An ATP-binding site is contributed by 191 to 194 (NRAE). Asp260 is a catalytic residue. A cytidylyltransferase region spans residues 334–463 (FTNGCFDLLH…IEKIKRTHND (130 aa)).

The protein in the N-terminal section; belongs to the carbohydrate kinase PfkB family. This sequence in the C-terminal section; belongs to the cytidylyltransferase family. In terms of assembly, homodimer.

The enzyme catalyses D-glycero-beta-D-manno-heptose 7-phosphate + ATP = D-glycero-beta-D-manno-heptose 1,7-bisphosphate + ADP + H(+). It catalyses the reaction D-glycero-beta-D-manno-heptose 1-phosphate + ATP + H(+) = ADP-D-glycero-beta-D-manno-heptose + diphosphate. The protein operates within nucleotide-sugar biosynthesis; ADP-L-glycero-beta-D-manno-heptose biosynthesis; ADP-L-glycero-beta-D-manno-heptose from D-glycero-beta-D-manno-heptose 7-phosphate: step 1/4. It participates in nucleotide-sugar biosynthesis; ADP-L-glycero-beta-D-manno-heptose biosynthesis; ADP-L-glycero-beta-D-manno-heptose from D-glycero-beta-D-manno-heptose 7-phosphate: step 3/4. In terms of biological role, catalyzes the phosphorylation of D-glycero-D-manno-heptose 7-phosphate at the C-1 position to selectively form D-glycero-beta-D-manno-heptose-1,7-bisphosphate. Catalyzes the ADP transfer from ATP to D-glycero-beta-D-manno-heptose 1-phosphate, yielding ADP-D-glycero-beta-D-manno-heptose. The protein is Bifunctional protein HldE of Helicobacter pylori (strain HPAG1).